We begin with the raw amino-acid sequence, 413 residues long: Arogenate dehydratase/prephenate dehydratase 6, chloroplastic (413 aa).

A chloroplast-targeting transit peptide spans 1-44 (MKALSSSSPILGASQPATATALIARSGRSEWQSSCAILTSKVIS). Residues 117–294 (RVAYQGVPGA…NVTRFVMLAR (178 aa)) form the Prephenate dehydratase domain. Residues 308–399 (SIVFAHEKGT…SFLRVLGSYP (92 aa)) form the ACT domain.

In terms of tissue distribution, expressed in roots, leaves, stems, flowers and siliques.

The protein localises to the plastid. The protein resides in the chloroplast stroma. The enzyme catalyses L-arogenate + H(+) = L-phenylalanine + CO2 + H2O. It catalyses the reaction prephenate + H(+) = 3-phenylpyruvate + CO2 + H2O. Its pathway is amino-acid biosynthesis; L-phenylalanine biosynthesis; L-phenylalanine from L-arogenate: step 1/1. It participates in amino-acid biosynthesis; L-phenylalanine biosynthesis; phenylpyruvate from prephenate: step 1/1. Functionally, converts the prephenate produced from the shikimate-chorismate pathway into phenylalanine. Dehydratase that uses arogenate and prephenate as substrates. Utilzes more efficiently arogenate than prephenate. The chain is Arogenate dehydratase/prephenate dehydratase 6, chloroplastic from Arabidopsis thaliana (Mouse-ear cress).